Reading from the N-terminus, the 232-residue chain is Lipoprotein-releasing system ATP-binding protein LolD 2 (232 aa).

The region spanning 11–231 (VYLHDIKRQY…SLQDGVVVEL (221 aa)) is the ABC transporter domain. 47–54 (APSGSGKS) is an ATP binding site.

This sequence belongs to the ABC transporter superfamily. Lipoprotein translocase (TC 3.A.1.125) family. In terms of assembly, the complex is composed of two ATP-binding proteins (LolD) and two transmembrane proteins (LolC and LolE).

It is found in the cell inner membrane. In terms of biological role, part of the ABC transporter complex LolCDE involved in the translocation of mature outer membrane-directed lipoproteins, from the inner membrane to the periplasmic chaperone, LolA. Responsible for the formation of the LolA-lipoprotein complex in an ATP-dependent manner. This chain is Lipoprotein-releasing system ATP-binding protein LolD 2, found in Rhodopseudomonas palustris (strain ATCC BAA-98 / CGA009).